Reading from the N-terminus, the 111-residue chain is uncharacterized protein (111 aa).

The protein resides in the cytoplasm. It localises to the nucleus. This is an uncharacterized protein from Schizosaccharomyces pombe (strain 972 / ATCC 24843) (Fission yeast).